A 398-amino-acid polypeptide reads, in one-letter code: MSEQLLTASMPIDAAPLSDHAVATAAPATSKINLLDLNRQQMREFFAEMGEKPFRADQVMKWMYHYCYDDFEQMTDINKGLRAKLQRVAEIRAPEVAEEQRSTDGTIKWAIKVGDQQVETVYIPEGDRATLCVSSQVGCALECKFCSTAQQGFNRNLRVSEIIGQVWRAAKIIGAVKATGIRPITNVVMMGMGEPLLNLNNVVPAMDIMMDDFGFGLSKRRVTLSTSGVVPALDKLGDMIDVALAISLHAPTDDIRDEIVPINRKYNIETFLAAVRRYLAKSNANGGRVTVEYVMLDHINDSTEQAHQLAECLKDTPCKINLIPWNPFPGAPYGRSSNSRVDRFSKVLMEYGFTTIVRKTRGDDIDAACGQLAGEVIDRTKRTLKKKMAGEPIAIKTV.

Glu-119 (proton acceptor) is an active-site residue. The region spanning 125–364 is the Radical SAM core domain; that stretch reads EGDRATLCVS…TIVRKTRGDD (240 aa). Cys-132 and Cys-369 are oxidised to a cystine. The [4Fe-4S] cluster site is built by Cys-139, Cys-143, and Cys-146. S-adenosyl-L-methionine-binding positions include 193–194, Ser-225, 247–249, and Asn-326; these read GE and SLH. The active-site S-methylcysteine intermediate is the Cys-369.

It belongs to the radical SAM superfamily. RlmN family. It depends on [4Fe-4S] cluster as a cofactor.

Its subcellular location is the cytoplasm. The enzyme catalyses adenosine(2503) in 23S rRNA + 2 reduced [2Fe-2S]-[ferredoxin] + 2 S-adenosyl-L-methionine = 2-methyladenosine(2503) in 23S rRNA + 5'-deoxyadenosine + L-methionine + 2 oxidized [2Fe-2S]-[ferredoxin] + S-adenosyl-L-homocysteine. It carries out the reaction adenosine(37) in tRNA + 2 reduced [2Fe-2S]-[ferredoxin] + 2 S-adenosyl-L-methionine = 2-methyladenosine(37) in tRNA + 5'-deoxyadenosine + L-methionine + 2 oxidized [2Fe-2S]-[ferredoxin] + S-adenosyl-L-homocysteine. Its function is as follows. Specifically methylates position 2 of adenine 2503 in 23S rRNA and position 2 of adenine 37 in tRNAs. m2A2503 modification seems to play a crucial role in the proofreading step occurring at the peptidyl transferase center and thus would serve to optimize ribosomal fidelity. In Yersinia enterocolitica serotype O:8 / biotype 1B (strain NCTC 13174 / 8081), this protein is Dual-specificity RNA methyltransferase RlmN.